A 283-amino-acid chain; its full sequence is Acetylglutamate kinase (283 aa).

Substrate is bound by residues 64–65, Arg86, and Asn178; that span reads GG.

This sequence belongs to the acetylglutamate kinase family. ArgB subfamily.

It localises to the cytoplasm. It carries out the reaction N-acetyl-L-glutamate + ATP = N-acetyl-L-glutamyl 5-phosphate + ADP. Its pathway is amino-acid biosynthesis; L-arginine biosynthesis; N(2)-acetyl-L-ornithine from L-glutamate: step 2/4. In terms of biological role, catalyzes the ATP-dependent phosphorylation of N-acetyl-L-glutamate. The polypeptide is Acetylglutamate kinase (Lactococcus lactis subsp. lactis (strain IL1403) (Streptococcus lactis)).